A 264-amino-acid polypeptide reads, in one-letter code: Apolipoprotein A-I (264 aa).

Residues 1-18 (MKAVVLAVAVLFLTGSQA) form the signal peptide. Repeat copies occupy residues 67-88 (LKLLDNWDTLSTTFSKLRADLG) and 89-110 (PVTQEFWDNLEKDTEWLRQEMN). The 10 X approximate tandem repeats stretch occupies residues 67-264 (LKLLDNWDTL…DQATKQLTAQ (198 aa)). Position 109 is a methionine sulfoxide (Met-109). One copy of the 3; half-length repeat lies at 111–121 (KDLQEVKQKVQ). Tandem repeats lie at residues 122-143 (PYLDNFHKKMQEEMERYREKVG), 144-165 (PLGTELREGARQKLQELQEKLT), 166-187 (PLGEDLRDRAREHVDTLRTQLA), 188-207 (PYSDDMRQRLTQRLEALRDS), and 208-229 (TTFADYQAKASEHLKTFSEKAK). The stretch at 230–240 (PALEDLRQGLL) is one 9; half-length repeat. Copy 10 of the repeat occupies 241–264 (PVLESLKASILSSIDQATKQLTAQ).

The protein belongs to the apolipoprotein A1/A4/E family. As to quaternary structure, homodimer. Interacts with APOA1BP and CLU. Component of a sperm activating protein complex (SPAP), consisting of APOA1, an immunoglobulin heavy chain, an immunoglobulin light chain and albumin. Interacts with NDRG1. Interacts with SCGB3A2. Interacts with NAXE and YJEFN3. In terms of processing, glycosylated. Post-translationally, palmitoylated. Phosphorylation sites are present in the extracellular medium.

The protein localises to the secreted. Functionally, participates in the reverse transport of cholesterol from tissues to the liver for excretion by promoting cholesterol efflux from tissues and by acting as a cofactor for the lecithin cholesterol acyltransferase (LCAT). As part of the SPAP complex, activates spermatozoa motility. The sequence is that of Apolipoprotein A-I (APOA1) from Chinchilla lanigera (Long-tailed chinchilla).